We begin with the raw amino-acid sequence, 139 residues long: Putative pre-16S rRNA nuclease (139 aa).

It belongs to the YqgF nuclease family.

It is found in the cytoplasm. Could be a nuclease involved in processing of the 5'-end of pre-16S rRNA. This Legionella pneumophila (strain Lens) protein is Putative pre-16S rRNA nuclease.